The following is a 1625-amino-acid chain: Probable cation-transporting ATPase I (1625 aa).

A run of 8 helical transmembrane segments spans residues 148-168, 177-197, 358-378, 637-657, 673-693, 778-798, 968-988, and 997-1017; these read VVSA…PNSA, LAIL…GATV, LIAA…AGAI, ASES…LLLV, WLNP…WSAA, ILAV…ALLV, LTSK…ALAL, and AVAD…PLVA. Aspartate 1053 serves as the catalytic 4-aspartylphosphate intermediate. Positions 1340 and 1344 each coordinate Mg(2+). The next 3 membrane-spanning stretches (helical) occupy residues 1401-1421, 1432-1452, and 1547-1567; these read ILVG…AFGA, LLVN…TSQF, and VIAT…TPVI.

The protein belongs to the cation transport ATPase (P-type) (TC 3.A.3) family.

Its subcellular location is the cell membrane. It carries out the reaction ATP + H2O = ADP + phosphate + H(+). The chain is Probable cation-transporting ATPase I (ctpI) from Mycobacterium tuberculosis (strain CDC 1551 / Oshkosh).